Reading from the N-terminus, the 381-residue chain is 5-amino-6-(D-ribitylamino)uracil--L-tyrosine 4-hydroxyphenyl transferase (381 aa).

Residues 59 to 306 enclose the Radical SAM core domain; the sequence is VTYVVNRNIN…TAVARIFLGN (248 aa). Residues Cys-73, Cys-77, and Cys-80 each coordinate [4Fe-4S] cluster.

Belongs to the radical SAM superfamily. CofH family. As to quaternary structure, consists of two subunits, CofG and CofH. Requires [4Fe-4S] cluster as cofactor.

The enzyme catalyses 5-amino-6-(D-ribitylamino)uracil + L-tyrosine + S-adenosyl-L-methionine = 5-amino-5-(4-hydroxybenzyl)-6-(D-ribitylimino)-5,6-dihydrouracil + 2-iminoacetate + 5'-deoxyadenosine + L-methionine + H(+). It functions in the pathway cofactor biosynthesis; coenzyme F0 biosynthesis. In terms of biological role, catalyzes the radical-mediated synthesis of 5-amino-5-(4-hydroxybenzyl)-6-(D-ribitylimino)-5,6-dihydrouracil from 5-amino-6-(D-ribitylamino)uracil and L-tyrosine. This Cyanothece sp. (strain PCC 7425 / ATCC 29141) protein is 5-amino-6-(D-ribitylamino)uracil--L-tyrosine 4-hydroxyphenyl transferase.